The chain runs to 286 residues: Probable tRNA(His) guanylyltransferase (286 aa).

Mg(2+)-binding residues include D29, G30, and D76. GTP contacts are provided by residues 29–34 and 75–76; these read DGKKFH and SD.

The protein belongs to the tRNA(His) guanylyltransferase family. Mg(2+) serves as cofactor.

It carries out the reaction a 5'-end ribonucleotide-tRNA(His) + GTP + ATP + H2O = a 5'-end phospho-guanosine-ribonucleotide-tRNA(His) + AMP + 2 diphosphate + H(+). Functionally, adds a GMP to the 5'-end of tRNA(His) after transcription and RNase P cleavage. This chain is Probable tRNA(His) guanylyltransferase, found in Drosophila melanogaster (Fruit fly).